The sequence spans 317 residues: Melanocyte-stimulating hormone receptor (317 aa).

The Extracellular portion of the chain corresponds to Met-1–Glu-37. Asn-29 is a glycosylation site (N-linked (GlcNAc...) asparagine). A helical membrane pass occupies residues Val-38 to Ile-63. At Ala-64–Pro-72 the chain is on the cytoplasmic side. Residues Met-73–Leu-93 traverse the membrane as a helical segment. Topologically, residues Glu-94–Asn-118 are extracellular. Residues Val-119 to Val-140 form a helical membrane-spanning segment. The Cytoplasmic segment spans residues Asp-141–Arg-163. Residues Ala-164–Cys-183 traverse the membrane as a helical segment. Over Asp-184 to Cys-191 the chain is Extracellular. A helical transmembrane segment spans residues Leu-192 to Leu-211. Over Ala-212–Ala-240 the chain is Cytoplasmic. Residues Val-241 to Leu-266 traverse the membrane as a helical segment. The Extracellular portion of the chain corresponds to Cys-267–Asn-279. The chain crosses the membrane as a helical span at residues Phe-280–Phe-300. At His-301–Trp-317 the chain is on the cytoplasmic side. A lipid anchor (S-palmitoyl cysteine) is attached at Cys-315.

The protein belongs to the G-protein coupled receptor 1 family. Interacts with MGRN1, but does not undergo MGRN1-mediated ubiquitination; this interaction competes with GNAS-binding and thus inhibits agonist-induced cAMP production. Interacts with OPN3; the interaction results in a decrease in MC1R-mediated cAMP signaling and ultimately a decrease in melanin production in melanocytes.

The protein resides in the cell membrane. Functionally, receptor for MSH (alpha, beta and gamma) and ACTH. The activity of this receptor is mediated by G proteins which activate adenylate cyclase. Mediates melanogenesis, the production of eumelanin (black/brown) and phaeomelanin (red/yellow), via regulation of cAMP signaling in melanocytes. This is Melanocyte-stimulating hormone receptor (MC1R) from Pan troglodytes (Chimpanzee).